The sequence spans 244 residues: Rho-related GTP-binding protein RhoE (244 aa).

Residue 30 to 37 (GDSQCGRT) coordinates GTP. The Effector region motif lies at 52 to 60 (YVPTVFENY). GTP is bound by residues 77–81 (DTSGS) and 135–138 (CKSD). Residue Cys-241 is modified to Cysteine methyl ester. Cys-241 is lipidated: S-farnesyl cysteine. Positions 242–244 (TVM) are cleaved as a propeptide — removed in mature form.

This sequence belongs to the small GTPase superfamily. Rho family. As to quaternary structure, binds ROCK1. Interacts with UBXD5.

Its subcellular location is the cell membrane. Functionally, binds GTP but lacks intrinsic GTPase activity and is resistant to Rho-specific GTPase-activating proteins. The polypeptide is Rho-related GTP-binding protein RhoE (RND3) (Sus scrofa (Pig)).